Consider the following 32-residue polypeptide: Hainantoxin F8-35.23 (32 aa).

As to expression, expressed by the venom gland.

The protein resides in the secreted. The chain is Hainantoxin F8-35.23 from Cyriopagopus hainanus (Chinese bird spider).